Here is a 207-residue protein sequence, read N- to C-terminus: Transcription factor DYT1 (207 aa).

The tract at residues 1-38 (MGGGSRFQEPVRMSRRKQVTKEKEEDENFKSPNLEAER) is disordered. The bHLH domain occupies 28 to 77 (NFKSPNLEAERRRREKLHCRLMALRSHVPIVTNMTKASIVEDAITYIGEL).

As to quaternary structure, homodimer. As to expression, mostly expressed in anthers, and, to a lower extent, in young inflorescences undergoing meiosis and siliques.

It localises to the nucleus. In terms of biological role, transcription factor. Involved in the control of tapetum development. Required for male fertility and pollen differentiation, especially during callose deposition. In Arabidopsis thaliana (Mouse-ear cress), this protein is Transcription factor DYT1.